We begin with the raw amino-acid sequence, 60 residues long: Large ribosomal subunit protein eL37 (60 aa).

Residues Cys-19, Cys-22, Cys-34, and Cys-37 each coordinate Zn(2+). The C4-type zinc finger occupies 19-37 (CRRCGSISYHARHKVCSAC).

Belongs to the eukaryotic ribosomal protein eL37 family. It depends on Zn(2+) as a cofactor.

Binds to the 23S rRNA. The polypeptide is Large ribosomal subunit protein eL37 (Methanosphaerula palustris (strain ATCC BAA-1556 / DSM 19958 / E1-9c)).